A 171-amino-acid chain; its full sequence is Laminin subunit beta-1 (171 aa).

The signal sequence occupies residues 1–29; it reads MNGRTQNLWFSTFRLVIVYALFFAKLCFG. 5 disulfide bridges follow: Cys-59–Cys-69, Cys-72–Cys-81, Cys-84–Cys-100, Cys-103–Cys-118, and Cys-105–Cys-128. 3 consecutive Laminin EGF-like domains span residues 66 to 102, 103 to 160, and 161 to 171; these read TGVCNNCLHNTKGTNCQLCKDGYYGNALLGTENVCQR, CQCP…TCKK, and CLCNGNINSAS. N-linked (GlcNAc...) asparagine glycosylation is present at Asn-130. 2 disulfides stabilise this stretch: Cys-131/Cys-140 and Cys-143/Cys-158.

In terms of assembly, laminin is a complex glycoprotein, consisting of three different polypeptide chains (alpha, beta, gamma), which are bound to each other by disulfide bonds into a cross-shaped molecule comprising one long and three short arms with globules at each end.

Its subcellular location is the secreted. It is found in the extracellular space. It localises to the extracellular matrix. The protein localises to the basement membrane. In terms of biological role, binding to cells via a high affinity receptor, laminin is thought to mediate the attachment, migration and organization of cells into tissues during embryonic development by interacting with other extracellular matrix components. The sequence is that of Laminin subunit beta-1 from Hydra vulgaris (Hydra).